Consider the following 132-residue polypeptide: Mini-ribonuclease 3 (132 aa).

Asp17 is a catalytic residue.

Belongs to the MrnC RNase family. Homodimer. Requires Mg(2+) as cofactor.

It localises to the cytoplasm. Involved in correct processing of both the 5' and 3' ends of 23S rRNA precursor. Processes 30S rRNA precursor transcript even in absence of ribonuclease 3 (Rnc); Rnc processes 30S rRNA into smaller rRNA precursors. The sequence is that of Mini-ribonuclease 3 from Enterococcus faecalis (strain ATCC 700802 / V583).